The chain runs to 208 residues: Thymidylate kinase (208 aa).

10 to 17 (GPEGSGKT) contributes to the ATP binding site.

The protein belongs to the thymidylate kinase family.

It carries out the reaction dTMP + ATP = dTDP + ADP. In terms of biological role, phosphorylation of dTMP to form dTDP in both de novo and salvage pathways of dTTP synthesis. In Bacillus mycoides (strain KBAB4) (Bacillus weihenstephanensis), this protein is Thymidylate kinase.